The primary structure comprises 541 residues: Tyrosine-protein kinase Yes (541 aa).

The span at Met1–Asn20 shows a compositional bias: basic and acidic residues. The tract at residues Met1 to Pro43 is disordered. Gly2 carries the N-myristoyl glycine lipid modification. The S-palmitoyl cysteine; in membrane form moiety is linked to residue Cys3. Positions Ser26 to Ser37 are enriched in low complexity. The 62-residue stretch at Gly89–Ser150 folds into the SH3 domain. The region spanning Trp156–Cys253 is the SH2 domain. The region spanning Leu275–Phe528 is the Protein kinase domain. Residues Leu281–Val289 and Lys303 contribute to the ATP site. Residue Asp394 is the Proton acceptor of the active site. Position 424 is a phosphotyrosine; by autocatalysis (Tyr424). A Phosphotyrosine; by CSK modification is found at Tyr535.

The protein belongs to the protein kinase superfamily. Tyr protein kinase family. SRC subfamily. In terms of processing, autophosphorylation at Tyr-424 maintains enzyme activity. Post-translationally, palmitoylation at Cys-3 promotes membrane localization.

The protein localises to the cell membrane. Its subcellular location is the cytoplasm. It is found in the cytoskeleton. The protein resides in the microtubule organizing center. It localises to the centrosome. The protein localises to the cytosol. Its subcellular location is the cell junction. It carries out the reaction L-tyrosyl-[protein] + ATP = O-phospho-L-tyrosyl-[protein] + ADP + H(+). Its function is as follows. Non-receptor protein tyrosine kinase that is involved in the regulation of cell growth and survival, apoptosis, cell-cell adhesion, cytoskeleton remodeling, differentiation, G2/M progression and cytokinesis. This chain is Tyrosine-protein kinase Yes (YES1), found in Gallus gallus (Chicken).